The following is a 724-amino-acid chain: Coiled-coil domain-containing protein 175 (724 aa).

Coiled-coil stretches lie at residues 131-164 (VEMSELHTKITRINDEIEFLKKKILHLQTDNTAL), 203-256 (INLE…RKET), 282-373 (VVLS…RQYK), 426-534 (ELHR…ERKL), and 565-627 (QLQV…QLRE).

This is Coiled-coil domain-containing protein 175 (CCDC175) from Bos taurus (Bovine).